The chain runs to 299 residues: MNLTHLKTLEAESIHIFREVAAEFDNPVMLYSVGKDSAVLLHLARKAFAPGKIPFPLLHVDTNWKFKEMIAFRDQMAKDYDFELLVHKNPEGIEMGMGPFTHGSATHTDVMKTQGLKQALNKYGFDAAFGGARRDEEKSRAKERVYSFRDENHRWDPKSQRPELWNIYNGKVNKGESIRVFPLSNWTELDIWQYIYLESIPIVPLYLAEKRPVVERDGTLIMVDDDRMPIGEDEEVQMKSVRFRTLGCYPLTGAVESTANTLPEIIQEMLLTKTSERQGRVIDHDSAGSMEKKKMEGYF.

This sequence belongs to the PAPS reductase family. CysD subfamily. Heterodimer composed of CysD, the smaller subunit, and CysN.

It catalyses the reaction sulfate + ATP + H(+) = adenosine 5'-phosphosulfate + diphosphate. The protein operates within sulfur metabolism; hydrogen sulfide biosynthesis; sulfite from sulfate: step 1/3. With CysN forms the ATP sulfurylase (ATPS) that catalyzes the adenylation of sulfate producing adenosine 5'-phosphosulfate (APS) and diphosphate, the first enzymatic step in sulfur assimilation pathway. APS synthesis involves the formation of a high-energy phosphoric-sulfuric acid anhydride bond driven by GTP hydrolysis by CysN coupled to ATP hydrolysis by CysD. The polypeptide is Sulfate adenylyltransferase subunit 2 (Colwellia psychrerythraea (strain 34H / ATCC BAA-681) (Vibrio psychroerythus)).